The chain runs to 221 residues: UPF0319 protein CGSHiGG_02140 (221 aa).

The first 21 residues, Met1–Ala21, serve as a signal peptide directing secretion.

The protein belongs to the UPF0319 family.

The protein is UPF0319 protein CGSHiGG_02140 of Haemophilus influenzae (strain PittGG).